Consider the following 82-residue polypeptide: uncharacterized protein (82 aa).

This is an uncharacterized protein from Anabaena cylindrica.